Consider the following 261-residue polypeptide: Triosephosphate isomerase (261 aa).

A substrate-binding site is contributed by 10–12 (NWK). The active-site Electrophile is histidine 100. The active-site Proton acceptor is the glutamate 172. Residues glycine 178, serine 218, and 239–240 (GG) each bind substrate.

This sequence belongs to the triosephosphate isomerase family. Homodimer.

Its subcellular location is the cytoplasm. It catalyses the reaction D-glyceraldehyde 3-phosphate = dihydroxyacetone phosphate. It participates in carbohydrate biosynthesis; gluconeogenesis. Its pathway is carbohydrate degradation; glycolysis; D-glyceraldehyde 3-phosphate from glycerone phosphate: step 1/1. Its function is as follows. Involved in the gluconeogenesis. Catalyzes stereospecifically the conversion of dihydroxyacetone phosphate (DHAP) to D-glyceraldehyde-3-phosphate (G3P). This chain is Triosephosphate isomerase, found in Mycobacterium sp. (strain JLS).